A 287-amino-acid polypeptide reads, in one-letter code: Octanoyl-[GcvH]:protein N-octanoyltransferase (287 aa).

The 209-residue stretch at 45–253 folds into the BPL/LPL catalytic domain; it reads GESPATARSW…ELKELSGRLY (209 aa). Catalysis depends on C150, which acts as the Acyl-thioester intermediate.

This sequence belongs to the octanoyltransferase LipL family.

It carries out the reaction N(6)-octanoyl-L-lysyl-[glycine-cleavage complex H protein] + L-lysyl-[lipoyl-carrier protein] = N(6)-octanoyl-L-lysyl-[lipoyl-carrier protein] + L-lysyl-[glycine-cleavage complex H protein]. Its pathway is protein modification; protein lipoylation via endogenous pathway; protein N(6)-(lipoyl)lysine from octanoyl-[acyl-carrier-protein]. Catalyzes the amidotransfer (transamidation) of the octanoyl moiety from octanoyl-GcvH to the lipoyl domain of the E2 subunit of lipoate-dependent enzymes. In Bacillus velezensis (strain DSM 23117 / BGSC 10A6 / LMG 26770 / FZB42) (Bacillus amyloliquefaciens subsp. plantarum), this protein is Octanoyl-[GcvH]:protein N-octanoyltransferase.